Consider the following 258-residue polypeptide: UPF0246 protein YaaA (258 aa).

The protein belongs to the UPF0246 family.

This chain is UPF0246 protein YaaA, found in Shigella sonnei (strain Ss046).